Here is a 384-residue protein sequence, read N- to C-terminus: S-adenosylmethionine synthase (384 aa).

Residue His-15 coordinates ATP. Asp-17 lines the Mg(2+) pocket. Glu-43 contacts K(+). L-methionine contacts are provided by Glu-56 and Gln-99. A flexible loop region spans residues 99–109 (QSPDINQGVDR). ATP is bound by residues 164 to 166 (DAK), 230 to 231 (RF), Asp-239, 245 to 246 (RK), Ala-262, and Lys-266. Position 239 (Asp-239) interacts with L-methionine. Lys-270 contacts L-methionine.

The protein belongs to the AdoMet synthase family. Homotetramer; dimer of dimers. Mg(2+) serves as cofactor. Requires K(+) as cofactor.

The protein localises to the cytoplasm. The catalysed reaction is L-methionine + ATP + H2O = S-adenosyl-L-methionine + phosphate + diphosphate. The protein operates within amino-acid biosynthesis; S-adenosyl-L-methionine biosynthesis; S-adenosyl-L-methionine from L-methionine: step 1/1. Catalyzes the formation of S-adenosylmethionine (AdoMet) from methionine and ATP. The overall synthetic reaction is composed of two sequential steps, AdoMet formation and the subsequent tripolyphosphate hydrolysis which occurs prior to release of AdoMet from the enzyme. The polypeptide is S-adenosylmethionine synthase (Salmonella arizonae (strain ATCC BAA-731 / CDC346-86 / RSK2980)).